The chain runs to 217 residues: Ras-related protein RABA2d (217 aa).

19–26 serves as a coordination point for GTP; the sequence is GDSGVGKT. An Effector region motif is present at residues 41–49; it reads SKSTIGVEF. GTP contacts are provided by residues 67-71, 125-128, and 155-156; these read DTAGQ, NKAD, and SA. A disordered region spans residues 196–217; the sequence is GQGTTINVEDTSGAGKRGCCST. Residues C214 and C215 are each lipidated (S-geranylgeranyl cysteine).

This sequence belongs to the small GTPase superfamily. Rab family. Expressed in root tips.

The protein localises to the endosome membrane. Its subcellular location is the golgi apparatus. The protein resides in the trans-Golgi network membrane. Its function is as follows. Intracellular vesicle trafficking and protein transport. This is Ras-related protein RABA2d (RABA2D) from Arabidopsis thaliana (Mouse-ear cress).